The following is a 547-amino-acid chain: RNA polymerase sigma factor sigF, chloroplastic (547 aa).

The segment covering 1–17 (MEATRNLVSSSPSFQTK) has biased composition (polar residues). 2 disordered regions span residues 1–28 (MEAT…SSPS) and 54–79 (FPAS…DDRT). Residues 1-55 (MEATRNLVSSSPSFQTKTHLKSSYSSPSSVVMLHDQTTTPVVNSRHLNSLSRHFP) constitute a chloroplast transit peptide. Residues 62-79 (EPREESRPLSHALRDDRT) are compositionally biased toward basic and acidic residues. S94, S95, S174, S176, S177, and S180 each carry phosphoserine; by CK2. The interval 163-226 (ANPSDNIKDS…QKTSAKKKYK (64 aa)) is disordered. Low complexity predominate over residues 172-181 (SLSTSSSMSL). T249 bears the Phosphothreonine; by CK2 mark. Positions 335–348 (DLLQEGSMGLMKSV) match the Polymerase core binding motif. The segment at residues 505 to 524 (LSEIGEIYGLSKERVRQLES) is a DNA-binding region (H-T-H motif).

The protein belongs to the sigma-70 factor family. In terms of assembly, interacts (via N-terminus) with DG1 (via C-terminus). Phosphorylated to acquire sigma activity; site-specific phosphorylation regulates promoter affinity. Phosphorylation at Ser-174 by chloroplastic CK2 requires prior phosphorylation at Ser-177. Phosphorylation at either Ser-94, Ser-95 or Ser-174 is required for sigma activation. As to expression, expressed in seedling, accumulating progressively. Present in leaves but not in roots.

Its subcellular location is the plastid. It localises to the chloroplast. Sigma factors are initiation factors that promote the attachment of plastid-encoded RNA polymerase (PEP) to specific initiation sites and are then released. Regulates transcription in chloroplast in a DG1-dependent manner. Involved in light-dependent chloroplast development. Required during early plant development and primary leaf formation. The protein is RNA polymerase sigma factor sigF, chloroplastic (SIGF) of Arabidopsis thaliana (Mouse-ear cress).